Here is a 174-residue protein sequence, read N- to C-terminus: Xanthine-guanine phosphoribosyltransferase (174 aa).

Residues 49–50 and 108–116 contribute to the 5-phospho-alpha-D-ribose 1-diphosphate site; these read RG and DDLVDTGAT. D109 contributes to the Mg(2+) binding site. 2 residues coordinate guanine: D112 and I155. The xanthine site is built by D112 and I155. Residues 112–116 and 154–155 each bind GMP; these read DTGAT and WI.

The protein belongs to the purine/pyrimidine phosphoribosyltransferase family. XGPT subfamily. Homotetramer. It depends on Mg(2+) as a cofactor.

It localises to the cell inner membrane. The catalysed reaction is GMP + diphosphate = guanine + 5-phospho-alpha-D-ribose 1-diphosphate. The enzyme catalyses XMP + diphosphate = xanthine + 5-phospho-alpha-D-ribose 1-diphosphate. It catalyses the reaction IMP + diphosphate = hypoxanthine + 5-phospho-alpha-D-ribose 1-diphosphate. The protein operates within purine metabolism; GMP biosynthesis via salvage pathway; GMP from guanine: step 1/1. Its pathway is purine metabolism; XMP biosynthesis via salvage pathway; XMP from xanthine: step 1/1. Functionally, purine salvage pathway enzyme that catalyzes the transfer of the ribosyl-5-phosphate group from 5-phospho-alpha-D-ribose 1-diphosphate (PRPP) to the N9 position of the 6-oxopurines guanine and xanthine to form the corresponding ribonucleotides GMP (guanosine 5'-monophosphate) and XMP (xanthosine 5'-monophosphate), with the release of PPi. To a lesser extent, also acts on hypoxanthine. The polypeptide is Xanthine-guanine phosphoribosyltransferase (Rhodopseudomonas palustris (strain BisB18)).